Here is a 426-residue protein sequence, read N- to C-terminus: uncharacterized protein (426 aa).

The protein belongs to the serpin family.

This is an uncharacterized protein from Methanosarcina mazei (strain ATCC BAA-159 / DSM 3647 / Goe1 / Go1 / JCM 11833 / OCM 88) (Methanosarcina frisia).